A 945-amino-acid polypeptide reads, in one-letter code: Netrin receptor UNC5B (945 aa).

An N-terminal signal peptide occupies residues 1–26; it reads MRARSGVRSALLLALLLCWDPTPSLA. Over 27 to 377 the chain is Extracellular; it reads GVDSAGQVLP…LETSGDVALY (351 aa). In terms of domain architecture, Ig-like spans 48-145; the sequence is PYFLLEPQDA…SGTTKSRRAY (98 aa). 9 disulfide bridges follow: Cys69–Cys130, Cys81–Cys128, Cys174–Cys225, Cys258–Cys295, Cys262–Cys299, Cys273–Cys285, Cys314–Cys348, Cys318–Cys353, and Cys326–Cys338. Positions 153–242 constitute an Ig-like C2-type domain; sequence KNFDQEPLAK…KRRSTTATVI (90 aa). Asn222 carries an N-linked (GlcNAc...) asparagine glycan. 2 consecutive TSP type-1 domains span residues 246-300 and 302-354; these read NGGW…TVCP and DGAW…GLCV. N-linked (GlcNAc...) asparagine glycosylation is present at Asn347. A helical transmembrane segment spans residues 378 to 398; the sequence is AGLVVAVFVVVAVLMAVGVIV. Topologically, residues 399–945 are cytoplasmic; it reads YRRNCRDFDT…LVAMATDGDC (547 aa). Cys403 carries the S-palmitoyl cysteine lipid modification. A ZU5 domain is found at 543–686; it reads SSVSGTFGCL…LGTYVFMGES (144 aa). Tyr581 is subject to Phosphotyrosine. The interval 689-838 is UPA domain; that stretch reads RSAVKRLQLA…AETPAGSLDA (150 aa). The interval 707–725 is interaction with DCC; it reads SLEYSLRVYCLEDTPVALK. One can recognise a Death domain in the interval 865-943; sequence KICSSLDAPN…EMLVAMATDG (79 aa).

This sequence belongs to the unc-5 family. As to quaternary structure, interacts with the cytoplasmic part of DCC. Interacts with GNAI2 via its cytoplasmic part. Interacts (via death domain) with DAPK1 (via death domain). Interacts (via extracellular domain) with FLRT2 and FLRT3 (via extracellular domain), but has higher affinity for FLRT3. Identified in a complex with FLRT3 and ADGRL3; does not interact with ADGRL3 by itself. Post-translationally, phosphorylated on cytoplasmic tyrosine residues. Palmitoylation is required for pro-apoptotic activity, but not for location at lipid rafts. In terms of processing, proteolytically cleaved by caspases during apoptosis. The cleavage does not take place when the receptor is associated with netrin ligand. Its cleavage by caspases is required to induce apoptosis. In terms of tissue distribution, highly expressed in brain. Expressed in lung during late development. Expressed during early blood vessel formation, in the semicircular canal and in a dorsal to ventral gradient in the retina.

The protein localises to the cell membrane. The protein resides in the membrane raft. Its function is as follows. Receptor for netrin required for axon guidance. Mediates axon repulsion of neuronal growth cones in the developing nervous system upon ligand binding. Axon repulsion in growth cones may be caused by its association with DCC that may trigger signaling for repulsion. Functions as a netrin receptor that negatively regulates vascular branching during angiogenesis. Mediates retraction of tip cell filopodia on endothelial growth cones in response to netrin. It also acts as a dependence receptor required for apoptosis induction when not associated with netrin ligand. Mediates apoptosis by activating DAPK1. In the absence of NTN1, activates DAPK1 by reducing its autoinhibitory phosphorylation at Ser-308 thereby increasing its catalytic activity. This is Netrin receptor UNC5B (Unc5b) from Mus musculus (Mouse).